Here is a 160-residue protein sequence, read N- to C-terminus: NADH-quinone oxidoreductase subunit I (160 aa).

4Fe-4S ferredoxin-type domains lie at 51–81 (LRRY…IEAA) and 91–120 (VRYD…EGPN). Residues C61, C64, C67, C71, C100, C103, C106, and C110 each coordinate [4Fe-4S] cluster.

Belongs to the complex I 23 kDa subunit family. In terms of assembly, NDH-1 is composed of 14 different subunits. Subunits NuoA, H, J, K, L, M, N constitute the membrane sector of the complex. [4Fe-4S] cluster serves as cofactor.

It is found in the cell inner membrane. It carries out the reaction a quinone + NADH + 5 H(+)(in) = a quinol + NAD(+) + 4 H(+)(out). In terms of biological role, NDH-1 shuttles electrons from NADH, via FMN and iron-sulfur (Fe-S) centers, to quinones in the respiratory chain. The immediate electron acceptor for the enzyme in this species is believed to be ubiquinone. Couples the redox reaction to proton translocation (for every two electrons transferred, four hydrogen ions are translocated across the cytoplasmic membrane), and thus conserves the redox energy in a proton gradient. The chain is NADH-quinone oxidoreductase subunit I from Anaplasma marginale (strain St. Maries).